Consider the following 176-residue polypeptide: Urease accessory protein UreE (176 aa).

The segment at 134–176 (FTPEGGAYGHGRTHAHEHGHTNHHGQHHDHADHGHSHDHSHDQ) is disordered. Residues 161 to 176 (HDHADHGHSHDHSHDQ) are compositionally biased toward basic and acidic residues.

Belongs to the UreE family.

It localises to the cytoplasm. Involved in urease metallocenter assembly. Binds nickel. Probably functions as a nickel donor during metallocenter assembly. This is Urease accessory protein UreE from Ruegeria sp. (strain TM1040) (Silicibacter sp.).